A 689-amino-acid chain; its full sequence is Glycine--tRNA ligase beta subunit (689 aa).

The protein belongs to the class-II aminoacyl-tRNA synthetase family. Tetramer of two alpha and two beta subunits.

Its subcellular location is the cytoplasm. It carries out the reaction tRNA(Gly) + glycine + ATP = glycyl-tRNA(Gly) + AMP + diphosphate. This is Glycine--tRNA ligase beta subunit from Photorhabdus laumondii subsp. laumondii (strain DSM 15139 / CIP 105565 / TT01) (Photorhabdus luminescens subsp. laumondii).